The primary structure comprises 156 residues: Small ribosomal subunit protein uS7 (156 aa).

Belongs to the universal ribosomal protein uS7 family. In terms of assembly, part of the 30S ribosomal subunit. Contacts proteins S9 and S11.

One of the primary rRNA binding proteins, it binds directly to 16S rRNA where it nucleates assembly of the head domain of the 30S subunit. Is located at the subunit interface close to the decoding center, probably blocks exit of the E-site tRNA. In Oceanobacillus iheyensis (strain DSM 14371 / CIP 107618 / JCM 11309 / KCTC 3954 / HTE831), this protein is Small ribosomal subunit protein uS7.